The sequence spans 305 residues: Tyrosine recombinase XerC (305 aa).

The Core-binding (CB) domain maps to 1–93 (MVLDGFAAHF…SWRQYCVWLV (93 aa)). One can recognise a Tyr recombinase domain in the interval 114–294 (RVPKALPQEW…DFDHIARLYD (181 aa)). Active-site residues include arginine 155, lysine 179, histidine 246, arginine 249, and histidine 272. Tyrosine 281 functions as the O-(3'-phospho-DNA)-tyrosine intermediate in the catalytic mechanism.

It belongs to the 'phage' integrase family. XerC subfamily. As to quaternary structure, forms a cyclic heterotetrameric complex composed of two molecules of XerC and two molecules of XerD.

Its subcellular location is the cytoplasm. Its function is as follows. Site-specific tyrosine recombinase, which acts by catalyzing the cutting and rejoining of the recombining DNA molecules. The XerC-XerD complex is essential to convert dimers of the bacterial chromosome into monomers to permit their segregation at cell division. It also contributes to the segregational stability of plasmids. The protein is Tyrosine recombinase XerC of Neisseria meningitidis serogroup C (strain 053442).